We begin with the raw amino-acid sequence, 367 residues long: Histidinol-phosphate aminotransferase (367 aa).

The residue at position 226 (Lys-226) is an N6-(pyridoxal phosphate)lysine.

Belongs to the class-II pyridoxal-phosphate-dependent aminotransferase family. Histidinol-phosphate aminotransferase subfamily. As to quaternary structure, homodimer. Requires pyridoxal 5'-phosphate as cofactor.

The enzyme catalyses L-histidinol phosphate + 2-oxoglutarate = 3-(imidazol-4-yl)-2-oxopropyl phosphate + L-glutamate. The protein operates within amino-acid biosynthesis; L-histidine biosynthesis; L-histidine from 5-phospho-alpha-D-ribose 1-diphosphate: step 7/9. The sequence is that of Histidinol-phosphate aminotransferase from Aliarcobacter butzleri (strain RM4018) (Arcobacter butzleri).